Consider the following 130-residue polypeptide: Small ribosomal subunit protein uS9 (130 aa).

The disordered stretch occupies residues 109 to 130 (RMKERRKYGLKKARKAPQFSKR). Residues 111–130 (KERRKYGLKKARKAPQFSKR) show a composition bias toward basic residues.

Belongs to the universal ribosomal protein uS9 family.

In Caldanaerobacter subterraneus subsp. tengcongensis (strain DSM 15242 / JCM 11007 / NBRC 100824 / MB4) (Thermoanaerobacter tengcongensis), this protein is Small ribosomal subunit protein uS9.